The following is a 177-amino-acid chain: Large ribosomal subunit protein uL6 (177 aa).

It belongs to the universal ribosomal protein uL6 family. Part of the 50S ribosomal subunit.

Functionally, this protein binds to the 23S rRNA, and is important in its secondary structure. It is located near the subunit interface in the base of the L7/L12 stalk, and near the tRNA binding site of the peptidyltransferase center. The protein is Large ribosomal subunit protein uL6 of Ruegeria pomeroyi (strain ATCC 700808 / DSM 15171 / DSS-3) (Silicibacter pomeroyi).